The primary structure comprises 295 residues: MNDFSQRFLFDDTDVRGEMVALRESYAHVLAKHAYPQPVAQLLGEMMAAAALLVGTLKFDGLLVLQARAEGPLSLLMVECSSARELRGIARYDAEQIGADADLQSLMPNGVLAITIDPSRGQRYQGIVDLDGVDLAECLSNYFASSEQLPTRFWLKADGQRARGLLLQQLPPHHQSEPQERQESWNHVLTLADTLTAEELLGLDNPTLLHRLYHQENVRLFDEQPLQFRCSCSRERSASALASLGQADAELLLAEQGGSVVIDCQFCNERYAFDAADIAQLFAGAGSEAPSQTRH.

Disulfide bonds link Cys-230/Cys-232 and Cys-264/Cys-267.

This sequence belongs to the HSP33 family. Post-translationally, under oxidizing conditions two disulfide bonds are formed involving the reactive cysteines. Under reducing conditions zinc is bound to the reactive cysteines and the protein is inactive.

It localises to the cytoplasm. Functionally, redox regulated molecular chaperone. Protects both thermally unfolding and oxidatively damaged proteins from irreversible aggregation. Plays an important role in the bacterial defense system toward oxidative stress. The sequence is that of 33 kDa chaperonin from Ectopseudomonas mendocina (strain ymp) (Pseudomonas mendocina).